A 550-amino-acid polypeptide reads, in one-letter code: Chaperonin GroEL 2 (550 aa).

Residues 30–33 (TLGP), K51, 87–91 (DGTTT), G415, and D496 each bind ATP.

Belongs to the chaperonin (HSP60) family. As to quaternary structure, forms a cylinder of 14 subunits composed of two heptameric rings stacked back-to-back. Interacts with the co-chaperonin GroES.

It is found in the cytoplasm. The enzyme catalyses ATP + H2O + a folded polypeptide = ADP + phosphate + an unfolded polypeptide.. Its function is as follows. Together with its co-chaperonin GroES, plays an essential role in assisting protein folding. The GroEL-GroES system forms a nano-cage that allows encapsulation of the non-native substrate proteins and provides a physical environment optimized to promote and accelerate protein folding. This chain is Chaperonin GroEL 2, found in Bradyrhizobium diazoefficiens (strain JCM 10833 / BCRC 13528 / IAM 13628 / NBRC 14792 / USDA 110).